Reading from the N-terminus, the 156-residue chain is S-ribosylhomocysteine lyase (156 aa).

Residues histidine 54, histidine 58, and cysteine 123 each coordinate Fe cation.

The protein belongs to the LuxS family. As to quaternary structure, homodimer. Requires Fe cation as cofactor.

It catalyses the reaction S-(5-deoxy-D-ribos-5-yl)-L-homocysteine = (S)-4,5-dihydroxypentane-2,3-dione + L-homocysteine. In terms of biological role, involved in the synthesis of autoinducer 2 (AI-2) which is secreted by bacteria and is used to communicate both the cell density and the metabolic potential of the environment. The regulation of gene expression in response to changes in cell density is called quorum sensing. Catalyzes the transformation of S-ribosylhomocysteine (RHC) to homocysteine (HC) and 4,5-dihydroxy-2,3-pentadione (DPD). The sequence is that of S-ribosylhomocysteine lyase from Ligilactobacillus salivarius (strain UCC118) (Lactobacillus salivarius).